Consider the following 225-residue polypeptide: Protein GrpE (225 aa).

Disordered regions lie at residues 1-44 (MTEE…ENAG) and 183-225 (VAVA…PDEG).

This sequence belongs to the GrpE family. In terms of assembly, homodimer.

It is found in the cytoplasm. Functionally, participates actively in the response to hyperosmotic and heat shock by preventing the aggregation of stress-denatured proteins, in association with DnaK and GrpE. It is the nucleotide exchange factor for DnaK and may function as a thermosensor. Unfolded proteins bind initially to DnaJ; upon interaction with the DnaJ-bound protein, DnaK hydrolyzes its bound ATP, resulting in the formation of a stable complex. GrpE releases ADP from DnaK; ATP binding to DnaK triggers the release of the substrate protein, thus completing the reaction cycle. Several rounds of ATP-dependent interactions between DnaJ, DnaK and GrpE are required for fully efficient folding. The sequence is that of Protein GrpE from Streptomyces coelicolor (strain ATCC BAA-471 / A3(2) / M145).